Consider the following 361-residue polypeptide: Chorismate synthase (361 aa).

Arg48 and Arg54 together coordinate NADP(+). Residues Arg125–Ser127, Asn238–Ala239, Gly278, Lys293–Ser297, and Arg319 each bind FMN.

It belongs to the chorismate synthase family. In terms of assembly, homotetramer. FMNH2 serves as cofactor.

It catalyses the reaction 5-O-(1-carboxyvinyl)-3-phosphoshikimate = chorismate + phosphate. The protein operates within metabolic intermediate biosynthesis; chorismate biosynthesis; chorismate from D-erythrose 4-phosphate and phosphoenolpyruvate: step 7/7. Functionally, catalyzes the anti-1,4-elimination of the C-3 phosphate and the C-6 proR hydrogen from 5-enolpyruvylshikimate-3-phosphate (EPSP) to yield chorismate, which is the branch point compound that serves as the starting substrate for the three terminal pathways of aromatic amino acid biosynthesis. This reaction introduces a second double bond into the aromatic ring system. This Salmonella choleraesuis (strain SC-B67) protein is Chorismate synthase.